A 359-amino-acid chain; its full sequence is Histidinol-phosphate aminotransferase (359 aa).

Lys217 carries the N6-(pyridoxal phosphate)lysine modification.

The protein belongs to the class-II pyridoxal-phosphate-dependent aminotransferase family. Histidinol-phosphate aminotransferase subfamily. Homodimer. The cofactor is pyridoxal 5'-phosphate.

The catalysed reaction is L-histidinol phosphate + 2-oxoglutarate = 3-(imidazol-4-yl)-2-oxopropyl phosphate + L-glutamate. It functions in the pathway amino-acid biosynthesis; L-histidine biosynthesis; L-histidine from 5-phospho-alpha-D-ribose 1-diphosphate: step 7/9. This chain is Histidinol-phosphate aminotransferase, found in Salmonella arizonae (strain ATCC BAA-731 / CDC346-86 / RSK2980).